The chain runs to 225 residues: UPF0758 protein Sfri_3828 (225 aa).

In terms of domain architecture, MPN spans 102–224 (ILTNPDLTRD…IVSFAERGWI (123 aa)). Zn(2+) contacts are provided by His173, His175, and Asp186. The JAMM motif signature appears at 173–186 (HNHPSGIAEPSQAD).

Belongs to the UPF0758 family.

This is UPF0758 protein Sfri_3828 from Shewanella frigidimarina (strain NCIMB 400).